Consider the following 203-residue polypeptide: Large ribosomal subunit protein uL18 (203 aa).

Belongs to the universal ribosomal protein uL18 family. As to quaternary structure, part of the 50S ribosomal subunit. Contacts the 5S and 23S rRNAs.

Functionally, this is one of the proteins that bind and probably mediate the attachment of the 5S RNA into the large ribosomal subunit, where it forms part of the central protuberance. This Pyrococcus furiosus (strain ATCC 43587 / DSM 3638 / JCM 8422 / Vc1) protein is Large ribosomal subunit protein uL18.